The primary structure comprises 671 residues: DNA ligase (671 aa).

NAD(+) is bound by residues Asp-32–Asp-36, Ser-81–Leu-82, and Glu-113. Lys-115 serves as the catalytic N6-AMP-lysine intermediate. NAD(+) is bound by residues Arg-136, Glu-173, Lys-290, and Lys-314. Zn(2+) contacts are provided by Cys-408, Cys-411, Cys-426, and Cys-432. The BRCT domain occupies Glu-593–Ala-671.

This sequence belongs to the NAD-dependent DNA ligase family. LigA subfamily. The cofactor is Mg(2+). Mn(2+) serves as cofactor.

The enzyme catalyses NAD(+) + (deoxyribonucleotide)n-3'-hydroxyl + 5'-phospho-(deoxyribonucleotide)m = (deoxyribonucleotide)n+m + AMP + beta-nicotinamide D-nucleotide.. Its function is as follows. DNA ligase that catalyzes the formation of phosphodiester linkages between 5'-phosphoryl and 3'-hydroxyl groups in double-stranded DNA using NAD as a coenzyme and as the energy source for the reaction. It is essential for DNA replication and repair of damaged DNA. This chain is DNA ligase, found in Salmonella typhi.